The primary structure comprises 308 residues: uncharacterized protein (308 aa).

This is an uncharacterized protein from Acanthamoeba polyphaga (Amoeba).